The primary structure comprises 311 residues: Methionyl-tRNA formyltransferase (311 aa).

110-113 (SLLP) lines the (6S)-5,6,7,8-tetrahydrofolate pocket.

The protein belongs to the Fmt family.

It catalyses the reaction L-methionyl-tRNA(fMet) + (6R)-10-formyltetrahydrofolate = N-formyl-L-methionyl-tRNA(fMet) + (6S)-5,6,7,8-tetrahydrofolate + H(+). Its function is as follows. Attaches a formyl group to the free amino group of methionyl-tRNA(fMet). The formyl group appears to play a dual role in the initiator identity of N-formylmethionyl-tRNA by promoting its recognition by IF2 and preventing the misappropriation of this tRNA by the elongation apparatus. This chain is Methionyl-tRNA formyltransferase, found in Streptococcus sanguinis (strain SK36).